Consider the following 228-residue polypeptide: Protein N-lysine methyltransferase METTL21D (228 aa).

An N-acetylalanine modification is found at Ala-2. S-adenosyl-L-methionine is bound by residues Trp-43, Gly-75–Gly-77, Asp-96, Trp-126, Ala-142, and Tyr-147.

This sequence belongs to the methyltransferase superfamily. METTL21 family. Interacts with ALKBH6. Interacts with ASPSCR1 and UBXN6; interaction with ASPSCR1, but not with UBXN6, enhances VCP methylation. As to expression, widely expressed.

The protein localises to the cytoplasm. The enzyme catalyses L-lysyl-[protein] + 3 S-adenosyl-L-methionine = N(6),N(6),N(6)-trimethyl-L-lysyl-[protein] + 3 S-adenosyl-L-homocysteine + 3 H(+). In terms of biological role, protein N-lysine methyltransferase that specifically trimethylates 'Lys-315' of VCP/p97; this modification may decrease VCP ATPase activity. This Mus musculus (Mouse) protein is Protein N-lysine methyltransferase METTL21D (Vcpkmt).